A 126-amino-acid chain; its full sequence is Holo-[acyl-carrier-protein] synthase (126 aa).

Mg(2+) contacts are provided by Asp9 and Glu58.

The protein belongs to the P-Pant transferase superfamily. AcpS family. Mg(2+) is required as a cofactor.

The protein localises to the cytoplasm. The catalysed reaction is apo-[ACP] + CoA = holo-[ACP] + adenosine 3',5'-bisphosphate + H(+). Functionally, transfers the 4'-phosphopantetheine moiety from coenzyme A to a Ser of acyl-carrier-protein. The polypeptide is Holo-[acyl-carrier-protein] synthase (Shewanella frigidimarina (strain NCIMB 400)).